A 1401-amino-acid polypeptide reads, in one-letter code: Kinesin-like protein KIF27 (1401 aa).

The region spanning 5 to 341 (PVKVAVRIRP…LKYANRARNI (337 aa)) is the Kinesin motor domain. 84–91 (GQTGSGKT) serves as a coordination point for ATP. 2 coiled-coil regions span residues 352–413 (ESDR…GYQC) and 489–557 (LAAD…KLNL). Phosphoserine is present on residues S643, S646, S672, S675, and S704. The disordered stretch occupies residues 643 to 662 (SDNSDDEESEGQEKSGTRCR). Coiled-coil stretches lie at residues 705–886 (QELN…IQLK), 916–1070 (DHLQ…AAIE), 1118–1154 (NKVV…LESA), and 1190–1219 (EGIM…TSRD). S999 carries the phosphoserine modification. The span at 1259-1280 (EELKWASRPESMKLSGREREMD) shows a compositional bias: basic and acidic residues. The disordered stretch occupies residues 1259–1332 (EELKWASRPE…TETDDNQFTK (74 aa)). Residues 1281 to 1292 (SSASSLRTQPNP) show a composition bias toward polar residues. Phosphoserine occurs at positions 1367 and 1389.

This sequence belongs to the TRAFAC class myosin-kinesin ATPase superfamily. Kinesin family. KIF27 subfamily. Interacts with STK36. Testis, pancreatic islet, germ cell tumors and Jurkat T-cells.

The protein localises to the cytoplasm. The protein resides in the cytoskeleton. Its subcellular location is the cell projection. It is found in the cilium. Its function is as follows. Plays an essential role in motile ciliogenesis. This is Kinesin-like protein KIF27 (KIF27) from Homo sapiens (Human).